The chain runs to 144 residues: Ribosome-binding factor A (144 aa).

Disordered stretches follow at residues 1 to 22 (MPRH…QLRV) and 125 to 144 (TPAV…EEEQ). The segment covering 134 to 144 (QDPDSDREEEQ) has biased composition (acidic residues).

The protein belongs to the RbfA family. In terms of assembly, monomer. Binds 30S ribosomal subunits, but not 50S ribosomal subunits or 70S ribosomes.

It localises to the cytoplasm. In terms of biological role, one of several proteins that assist in the late maturation steps of the functional core of the 30S ribosomal subunit. Associates with free 30S ribosomal subunits (but not with 30S subunits that are part of 70S ribosomes or polysomes). Required for efficient processing of 16S rRNA. May interact with the 5'-terminal helix region of 16S rRNA. The polypeptide is Ribosome-binding factor A (Bradyrhizobium diazoefficiens (strain JCM 10833 / BCRC 13528 / IAM 13628 / NBRC 14792 / USDA 110)).